Reading from the N-terminus, the 142-residue chain is Large ribosomal subunit protein uL13 (142 aa).

It belongs to the universal ribosomal protein uL13 family. As to quaternary structure, part of the 50S ribosomal subunit.

This protein is one of the early assembly proteins of the 50S ribosomal subunit, although it is not seen to bind rRNA by itself. It is important during the early stages of 50S assembly. The protein is Large ribosomal subunit protein uL13 of Coxiella burnetii (strain CbuG_Q212) (Coxiella burnetii (strain Q212)).